The following is a 490-amino-acid chain: UDP-N-acetylmuramoyl-L-alanyl-D-glutamate--2,6-diaminopimelate ligase (490 aa).

Serine 31 lines the UDP-N-acetyl-alpha-D-muramoyl-L-alanyl-D-glutamate pocket. 109–115 (GTNGKTS) lines the ATP pocket. UDP-N-acetyl-alpha-D-muramoyl-L-alanyl-D-glutamate contacts are provided by residues asparagine 150, 151-152 (TT), serine 178, and arginine 186. N6-carboxylysine is present on lysine 218. Meso-2,6-diaminopimelate contacts are provided by residues arginine 384, 408 to 411 (DNPR), glycine 458, and glutamate 462. The Meso-diaminopimelate recognition motif signature appears at 408 to 411 (DNPR).

It belongs to the MurCDEF family. MurE subfamily. Mg(2+) serves as cofactor. Post-translationally, carboxylation is probably crucial for Mg(2+) binding and, consequently, for the gamma-phosphate positioning of ATP.

The protein resides in the cytoplasm. The catalysed reaction is UDP-N-acetyl-alpha-D-muramoyl-L-alanyl-D-glutamate + meso-2,6-diaminopimelate + ATP = UDP-N-acetyl-alpha-D-muramoyl-L-alanyl-gamma-D-glutamyl-meso-2,6-diaminopimelate + ADP + phosphate + H(+). It participates in cell wall biogenesis; peptidoglycan biosynthesis. Catalyzes the addition of meso-diaminopimelic acid to the nucleotide precursor UDP-N-acetylmuramoyl-L-alanyl-D-glutamate (UMAG) in the biosynthesis of bacterial cell-wall peptidoglycan. This chain is UDP-N-acetylmuramoyl-L-alanyl-D-glutamate--2,6-diaminopimelate ligase, found in Bacillus velezensis (strain DSM 23117 / BGSC 10A6 / LMG 26770 / FZB42) (Bacillus amyloliquefaciens subsp. plantarum).